The primary structure comprises 206 residues: 2,3-bisphosphoglycerate-dependent phosphoglycerate mutase (206 aa).

Substrate contacts are provided by residues 9-16, 22-23, Arg61, 88-91, Lys99, 115-116, and 159-160; these read RHGQSEWN, TG, ERNY, RR, and GN. The active-site Tele-phosphohistidine intermediate is the His10. The active-site Proton donor/acceptor is the Glu88.

The protein belongs to the phosphoglycerate mutase family. BPG-dependent PGAM subfamily. In terms of assembly, homodimer.

It carries out the reaction (2R)-2-phosphoglycerate = (2R)-3-phosphoglycerate. It participates in carbohydrate degradation; glycolysis; pyruvate from D-glyceraldehyde 3-phosphate: step 3/5. Its function is as follows. Catalyzes the interconversion of 2-phosphoglycerate and 3-phosphoglycerate. This is 2,3-bisphosphoglycerate-dependent phosphoglycerate mutase from Bartonella tribocorum (strain CIP 105476 / IBS 506).